Consider the following 329-residue polypeptide: Lipoyl synthase (329 aa).

Positions Met-1–Lys-23 are disordered. The [4Fe-4S] cluster site is built by Cys-76, Cys-81, Cys-87, Cys-102, Cys-106, Cys-109, and Ser-316. In terms of domain architecture, Radical SAM core spans Cys-87 to Thr-305.

The protein belongs to the radical SAM superfamily. Lipoyl synthase family. It depends on [4Fe-4S] cluster as a cofactor.

It is found in the cytoplasm. It carries out the reaction [[Fe-S] cluster scaffold protein carrying a second [4Fe-4S](2+) cluster] + N(6)-octanoyl-L-lysyl-[protein] + 2 oxidized [2Fe-2S]-[ferredoxin] + 2 S-adenosyl-L-methionine + 4 H(+) = [[Fe-S] cluster scaffold protein] + N(6)-[(R)-dihydrolipoyl]-L-lysyl-[protein] + 4 Fe(3+) + 2 hydrogen sulfide + 2 5'-deoxyadenosine + 2 L-methionine + 2 reduced [2Fe-2S]-[ferredoxin]. It functions in the pathway protein modification; protein lipoylation via endogenous pathway; protein N(6)-(lipoyl)lysine from octanoyl-[acyl-carrier-protein]: step 2/2. Functionally, catalyzes the radical-mediated insertion of two sulfur atoms into the C-6 and C-8 positions of the octanoyl moiety bound to the lipoyl domains of lipoate-dependent enzymes, thereby converting the octanoylated domains into lipoylated derivatives. In Burkholderia mallei (strain NCTC 10247), this protein is Lipoyl synthase.